The following is a 525-amino-acid chain: GMP synthase [glutamine-hydrolyzing] (525 aa).

The region spanning 9–207 (RILILDFGSQ…VRDICQCEAL (199 aa)) is the Glutamine amidotransferase type-1 domain. Residue Cys-86 is the Nucleophile of the active site. Catalysis depends on residues His-181 and Glu-183. Positions 208-400 (WTPAKIIDDA…LGLPYDMLYR (193 aa)) constitute a GMPS ATP-PPase domain. Residue 235–241 (SGGVDSS) participates in ATP binding.

In terms of assembly, homodimer.

The catalysed reaction is XMP + L-glutamine + ATP + H2O = GMP + L-glutamate + AMP + diphosphate + 2 H(+). It participates in purine metabolism; GMP biosynthesis; GMP from XMP (L-Gln route): step 1/1. In terms of biological role, catalyzes the synthesis of GMP from XMP. This chain is GMP synthase [glutamine-hydrolyzing], found in Shigella flexneri serotype 5b (strain 8401).